A 349-amino-acid polypeptide reads, in one-letter code: Transcription repressor OFP5 (349 aa).

Disordered regions lie at residues 1 to 20, 29 to 94, and 143 to 183; these read MMRW…GLSR, KLSG…KESN, and KQRC…GYSR. Low complexity predominate over residues 10–20; it reads VSSSSSSGLSR. Over residues 37 to 48 the composition is skewed to basic and acidic residues; it reads KPAKEKKQDEKA. Polar residues predominate over residues 49 to 62; it reads SQNISVKTSLSSTT. Composition is skewed to basic and acidic residues over residues 63 to 94 and 143 to 167; these read RRSD…KESN and KQRC…DAGV. The OVATE domain occupies 286–345; the sequence is VVKCSSDPQKDFRDSMIEMIMENGINHPEELKELLVCYLRLNTDEYHDMIISVFQQVHND.

In terms of assembly, interacts with BLH1, BLH2, BLH3, BLH4, BLH6 and BLH10. In terms of tissue distribution, expressed in roots, rosette and cauline leaves, and flower buds.

The protein localises to the nucleus. Transcriptional repressor that regulates multiple aspects of plant growth and development through the regulation of BEL1-LIKE (BLH) and KNOX TALE (KNAT) homeodomain transcription factors. Required for embryo development. In Arabidopsis thaliana (Mouse-ear cress), this protein is Transcription repressor OFP5 (OFP5).